The following is a 304-amino-acid chain: tRNA dimethylallyltransferase (304 aa).

10 to 17 (GPTASGKT) lines the ATP pocket. 12–17 (TASGKT) contacts substrate. Interaction with substrate tRNA stretches follow at residues 35–38 (DSAL), 159–163 (QRLSR), and 240–245 (RCVGYR).

Belongs to the IPP transferase family. In terms of assembly, monomer. Mg(2+) is required as a cofactor.

The enzyme catalyses adenosine(37) in tRNA + dimethylallyl diphosphate = N(6)-dimethylallyladenosine(37) in tRNA + diphosphate. Functionally, catalyzes the transfer of a dimethylallyl group onto the adenine at position 37 in tRNAs that read codons beginning with uridine, leading to the formation of N6-(dimethylallyl)adenosine (i(6)A). The chain is tRNA dimethylallyltransferase from Shewanella sp. (strain W3-18-1).